Reading from the N-terminus, the 328-residue chain is 3-dehydroquinate synthase (328 aa).

The protein belongs to the archaeal-type DHQ synthase family.

It catalyses the reaction 2-amino-2,3,7-trideoxy-D-lyxo-hept-6-ulosonate + NAD(+) + H2O = 3-dehydroquinate + NH4(+) + NADH + H(+). Catalyzes the oxidative deamination and cyclization of 2-amino-3,7-dideoxy-D-threo-hept-6-ulosonic acid (ADH) to yield 3-dehydroquinate (DHQ), which is fed into the canonical shikimic pathway of aromatic amino acid biosynthesis. The chain is 3-dehydroquinate synthase from Methanosphaerula palustris (strain ATCC BAA-1556 / DSM 19958 / E1-9c).